Here is a 206-residue protein sequence, read N- to C-terminus: dITP/XTP pyrophosphatase (206 aa).

S7 to K12 serves as a coordination point for substrate. The active-site Proton acceptor is D72. D72 provides a ligand contact to Mg(2+). Residues S73, F155–D158, K178, and H183–R184 each bind substrate.

Belongs to the HAM1 NTPase family. In terms of assembly, homodimer. It depends on Mg(2+) as a cofactor.

It catalyses the reaction XTP + H2O = XMP + diphosphate + H(+). The catalysed reaction is dITP + H2O = dIMP + diphosphate + H(+). It carries out the reaction ITP + H2O = IMP + diphosphate + H(+). Its function is as follows. Pyrophosphatase that catalyzes the hydrolysis of nucleoside triphosphates to their monophosphate derivatives, with a high preference for the non-canonical purine nucleotides XTP (xanthosine triphosphate), dITP (deoxyinosine triphosphate) and ITP. Seems to function as a house-cleaning enzyme that removes non-canonical purine nucleotides from the nucleotide pool, thus preventing their incorporation into DNA/RNA and avoiding chromosomal lesions. This is dITP/XTP pyrophosphatase from Mycobacteroides abscessus (strain ATCC 19977 / DSM 44196 / CCUG 20993 / CIP 104536 / JCM 13569 / NCTC 13031 / TMC 1543 / L948) (Mycobacterium abscessus).